We begin with the raw amino-acid sequence, 286 residues long: MKKTIQRGLFTGALVLLTAMTSKPAHAAVNYQALVDADVKKFQGYFLKEFPGVKLEDFGDGVYALDEDSRKQWKEMEEFPPYELDVEAGKALFNKPFANGKSLGSCFSNGGAVRGMYPYFDEKRKEVITLEMAINECRVANGEKPYAPKKGDIARVSAYIASISRGQKIDVKVKSKAAYDAYMKGKEMFYAKRGQLNMSCSGCHMEYSGRHLRAEIISPALGHTTHFPVFRSKWGEIGTLHRRYAGCNENIGAKPFPAQSKEYRDLEFFQTVMSNGLKFNGPASRK.

A signal peptide spans 1–28; it reads MKKTIQRGLFTGALVLLTAMTSKPAHAA. Residues cysteine 106 and cysteine 137 are joined by a disulfide bond. The Cytochrome c domain maps to 180 to 286; sequence DAYMKGKEMF…LKFNGPASRK (107 aa). The heme site is built by cysteine 200 and histidine 204. Arginine 243 contacts substrate. Residue cysteine 247 coordinates heme. Cysteine 247 (cysteine persulfide intermediate) is an active-site residue.

It belongs to the SoxA family. In terms of assembly, heterodimer of SoxA and SoxX. The SoxAX complex interacts with CT1020, SoxAX-binding protein SaxB (SoxK); this interaction stimulates catalytic activity of the complex. Heme serves as cofactor. In terms of processing, cysteine persulfide at Cys-247.

The protein localises to the periplasm. The catalysed reaction is L-cysteinyl-[SoxY protein] + thiosulfate + 2 Fe(III)-[cytochrome c] = S-sulfosulfanyl-L-cysteinyl-[SoxY protein] + 2 Fe(II)-[cytochrome c] + 2 H(+). It catalyses the reaction S-sulfanyl-L-cysteinyl-[SoxY protein] + thiosulfate + 2 Fe(III)-[cytochrome c] = S-(2-sulfodisulfanyl)-L-cysteinyl-[SoxY protein] + 2 Fe(II)-[cytochrome c] + 2 H(+). C-type monoheme cytochrome, which is part of the SoxAX cytochrome complex involved in sulfur oxidation. The SoxAX complex catalyzes the formation of a heterodisulfide bond between the conserved cysteine residue on a sulfur carrier SoxYZ complex subunit SoxY and thiosulfate or other inorganic sulfur substrates. This leads to the liberation of two electrons, which may be transferred from the SoxAX complex to another cytochrome c and which then may be used for reductive CO(2) fixation. The chain is L-cysteine S-thiosulfotransferase subunit SoxA from Chlorobaculum thiosulfatiphilum (Chlorobium limicola f.sp. thiosulfatophilum).